Here is a 368-residue protein sequence, read N- to C-terminus: Probable staphylococcal-like nuclease CAN2 (368 aa).

Gly-2 is lipidated: N-myristoyl glycine. Cys-7 carries the S-palmitoyl cysteine lipid modification. The segment at 16 to 56 (DHYPYYKPTSRPHYQPPHYHGQPAAPPAPLQQQHLGPHGVT) is disordered. Positions 27–38 (PHYQPPHYHGQP) are enriched in low complexity. The 177-residue stretch at 168 to 344 (NTLPVYDKCI…RAANRGLWAS (177 aa)) folds into the TNase-like domain. Asp-181 contributes to the Ca(2+) binding site. Arg-251 is a catalytic residue. Asp-256 contributes to the Ca(2+) binding site. Catalysis depends on residues Glu-259 and Arg-293.

The protein belongs to the thermonuclease family. Requires Ca(2+) as cofactor.

It localises to the cell membrane. In terms of biological role, enzyme that catalyzes the hydrolysis of both DNA and RNA at the 5' position of the phosphodiester bond. This Oryza sativa subsp. japonica (Rice) protein is Probable staphylococcal-like nuclease CAN2.